Consider the following 124-residue polypeptide: Vitelline membrane protein Vm32E (124 aa).

Positions Met1–Ala19 are cleaved as a signal peptide. The VM domain maps to Ser42–Thr81.

The protein belongs to the vitelline membrane family.

The protein resides in the secreted. In terms of biological role, major early eggshell protein. The protein is Vitelline membrane protein Vm32E of Drosophila pseudoobscura pseudoobscura (Fruit fly).